A 328-amino-acid chain; its full sequence is uncharacterized protein (328 aa).

The segment at 1-22 is disordered; sequence MPVKPNQPRPSTKQDPSSGASR. Residues 9–21 show a composition bias toward polar residues; that stretch reads RPSTKQDPSSGAS. Transmembrane regions (helical) follow at residues 66 to 86, 126 to 146, 176 to 196, 221 to 241, 255 to 275, and 290 to 310; these read FSFL…GFVL, TVGL…IGNL, FLSL…TSVA, LIAL…ILWV, GTLM…VALP, and IGLM…AAWI.

The protein to E.coli YhjD.

The protein localises to the cell inner membrane. This is an uncharacterized protein from Dickeya dadantii (strain 3937) (Erwinia chrysanthemi (strain 3937)).